The sequence spans 241 residues: MNVENQTPNVDHQEIAKFEAIASRWWDLEGEFKPLHRINPLRLGYISQRAEGLFGKKVLDVGCGGGILAESMAREGADVTGLDMGAEPLQVARLHALESGVTVDYVQETVEAHADAHSGLYDVVTCMEMLEHVPDPQSVVQACAKLVKPGGHVFFSTINRNAKAWMMAVIGAEYILKMVPRGTHDIKKFIRPAELMRWVDDTPLRERHITGLHYNLLTDRFKLGPNVDVNYMLHTSHDKQC.

S-adenosyl-L-methionine-binding residues include Arg-42, Gly-62, Asp-83, and Met-127.

It belongs to the methyltransferase superfamily. UbiG/COQ3 family.

It catalyses the reaction a 3-demethylubiquinol + S-adenosyl-L-methionine = a ubiquinol + S-adenosyl-L-homocysteine + H(+). It carries out the reaction a 3-(all-trans-polyprenyl)benzene-1,2-diol + S-adenosyl-L-methionine = a 2-methoxy-6-(all-trans-polyprenyl)phenol + S-adenosyl-L-homocysteine + H(+). It functions in the pathway cofactor biosynthesis; ubiquinone biosynthesis. In terms of biological role, O-methyltransferase that catalyzes the 2 O-methylation steps in the ubiquinone biosynthetic pathway. This chain is Ubiquinone biosynthesis O-methyltransferase, found in Pectobacterium atrosepticum (strain SCRI 1043 / ATCC BAA-672) (Erwinia carotovora subsp. atroseptica).